The primary structure comprises 117 residues: Large ribosomal subunit protein bL20 (117 aa).

It belongs to the bacterial ribosomal protein bL20 family.

Binds directly to 23S ribosomal RNA and is necessary for the in vitro assembly process of the 50S ribosomal subunit. It is not involved in the protein synthesizing functions of that subunit. The protein is Large ribosomal subunit protein bL20 of Streptococcus suis (strain 05ZYH33).